The following is a 301-amino-acid chain: Small ribosomal subunit biogenesis GTPase RsgA (301 aa).

The CP-type G domain occupies 65–224 (YNQLIRPKVA…LVDTPGFGNL (160 aa)). Residues 115-118 (SKYD) and 167-175 (GNSGVGKST) each bind GTP. Cysteine 247, cysteine 252, histidine 254, and cysteine 260 together coordinate Zn(2+).

Belongs to the TRAFAC class YlqF/YawG GTPase family. RsgA subfamily. In terms of assembly, monomer. Associates with 30S ribosomal subunit, binds 16S rRNA. Zn(2+) serves as cofactor.

Its subcellular location is the cytoplasm. Its function is as follows. One of several proteins that assist in the late maturation steps of the functional core of the 30S ribosomal subunit. Helps release RbfA from mature subunits. May play a role in the assembly of ribosomal proteins into the subunit. Circularly permuted GTPase that catalyzes slow GTP hydrolysis, GTPase activity is stimulated by the 30S ribosomal subunit. This Ureaplasma urealyticum serovar 10 (strain ATCC 33699 / Western) protein is Small ribosomal subunit biogenesis GTPase RsgA.